The following is a 327-amino-acid chain: Glycerol-3-phosphate dehydrogenase [NAD(P)+] (327 aa).

The NADPH site is built by Phe13, Arg34, and Lys107. Sn-glycerol 3-phosphate-binding residues include Lys107 and Gly135. Ala139 contributes to the NADPH binding site. Sn-glycerol 3-phosphate contacts are provided by Lys190, Asp243, Ser253, Arg254, and Asn255. The active-site Proton acceptor is Lys190. Residue Arg254 participates in NADPH binding. The NADPH site is built by Val276 and Glu277.

The protein belongs to the NAD-dependent glycerol-3-phosphate dehydrogenase family.

Its subcellular location is the cytoplasm. The enzyme catalyses sn-glycerol 3-phosphate + NAD(+) = dihydroxyacetone phosphate + NADH + H(+). It catalyses the reaction sn-glycerol 3-phosphate + NADP(+) = dihydroxyacetone phosphate + NADPH + H(+). It functions in the pathway membrane lipid metabolism; glycerophospholipid metabolism. In terms of biological role, catalyzes the reduction of the glycolytic intermediate dihydroxyacetone phosphate (DHAP) to sn-glycerol 3-phosphate (G3P), the key precursor for phospholipid synthesis. The protein is Glycerol-3-phosphate dehydrogenase [NAD(P)+] of Rhizobium johnstonii (strain DSM 114642 / LMG 32736 / 3841) (Rhizobium leguminosarum bv. viciae).